Reading from the N-terminus, the 515-residue chain is Maturase K (515 aa).

It belongs to the intron maturase 2 family. MatK subfamily.

It localises to the plastid. The protein resides in the chloroplast. Its function is as follows. Usually encoded in the trnK tRNA gene intron. Probably assists in splicing its own and other chloroplast group II introns. The chain is Maturase K from Alpinia calcarata (Snap ginger).